A 333-amino-acid polypeptide reads, in one-letter code: Eukaryotic translation initiation factor 3 subunit I (333 aa).

WD repeat units lie at residues 8–47 (GHERSITQIKYNREGDLLFTVAKDPIVNVWYSVNGERLGT), 50–91 (GHTG…ALLK), 144–183 (CNDSKITSAVWGPLGECIIAGHESGELNQYSAKSGEVLVN), and 186–225 (EHSRQINDIQLSREMTMFVTASKDNTAKLFDSTTLEHQKT). Thr219 carries the post-translational modification Phosphothreonine. Lys264 carries the N6-acetyllysine modification. Lys282 is covalently cross-linked (Glycyl lysine isopeptide (Lys-Gly) (interchain with G-Cter in ubiquitin)). The stretch at 283 to 324 (GHFGPINSVAFHPDGKSYSSGGEDGYVRIHYFDPQYFEFEFE) is one WD 5 repeat. At Tyr308 the chain carries Phosphotyrosine.

Belongs to the eIF-3 subunit I family. As to quaternary structure, component of the eukaryotic translation initiation factor 3 (eIF-3) complex, which is composed of 13 subunits: EIF3A, EIF3B, EIF3C, EIF3D, EIF3E, EIF3F, EIF3G, EIF3H, EIF3I, EIF3J, EIF3K, EIF3L and EIF3M. The eIF-3 complex appears to include 3 stable modules: module A is composed of EIF3A, EIF3B, EIF3G and EIF3I; module B is composed of EIF3F, EIF3H, and EIF3M; and module C is composed of EIF3C, EIF3D, EIF3E, EIF3K and EIF3L. EIF3C of module C binds EIF3B of module A and EIF3H of module B, thereby linking the three modules. EIF3J is a labile subunit that binds to the eIF-3 complex via EIF3B. The eIF-3 complex interacts with RPS6KB1 under conditions of nutrient depletion. Mitogenic stimulation leads to binding and activation of a complex composed of MTOR and RPTOR, leading to phosphorylation and release of RPS6KB1 and binding of EIF4B to eIF-3. In terms of processing, phosphorylated by TGF-beta type II receptor.

It localises to the cytoplasm. In terms of biological role, component of the eukaryotic translation initiation factor 3 (eIF-3) complex, which is required for several steps in the initiation of protein synthesis. The eIF-3 complex associates with the 40S ribosome and facilitates the recruitment of eIF-1, eIF-1A, eIF-2:GTP:methionyl-tRNAi and eIF-5 to form the 43S pre-initiation complex (43S PIC). The eIF-3 complex stimulates mRNA recruitment to the 43S PIC and scanning of the mRNA for AUG recognition. The eIF-3 complex is also required for disassembly and recycling of post-termination ribosomal complexes and subsequently prevents premature joining of the 40S and 60S ribosomal subunits prior to initiation. The eIF-3 complex specifically targets and initiates translation of a subset of mRNAs involved in cell proliferation, including cell cycling, differentiation and apoptosis, and uses different modes of RNA stem-loop binding to exert either translational activation or repression. This Oryctolagus cuniculus (Rabbit) protein is Eukaryotic translation initiation factor 3 subunit I.